Reading from the N-terminus, the 256-residue chain is Undecaprenyl-diphosphatase (256 aa).

7 consecutive transmembrane segments (helical) span residues 1-21 (MDIF…FLPV), 41-61 (FHKT…LALF), 69-89 (VDIW…GFLL), 96-116 (LFAP…FLVL), 172-192 (VAAE…TGYD), 207-227 (ALGV…KGFL), and 233-253 (FNFV…LFYL).

It belongs to the UppP family.

The protein localises to the cell inner membrane. It carries out the reaction di-trans,octa-cis-undecaprenyl diphosphate + H2O = di-trans,octa-cis-undecaprenyl phosphate + phosphate + H(+). Catalyzes the dephosphorylation of undecaprenyl diphosphate (UPP). Confers resistance to bacitracin. The polypeptide is Undecaprenyl-diphosphatase (Wolinella succinogenes (strain ATCC 29543 / DSM 1740 / CCUG 13145 / JCM 31913 / LMG 7466 / NCTC 11488 / FDC 602W) (Vibrio succinogenes)).